The sequence spans 596 residues: PDZ and LIM domain protein 5 (596 aa).

S2 is subject to N-acetylserine. S2 bears the Phosphoserine mark. In terms of domain architecture, PDZ spans 2-85 (SNYSVSLVGP…SLNMTLQRAS (84 aa)). K89 bears the N6-acetyllysine; alternate mark. An N6-succinyllysine; alternate modification is found at K89. K89 participates in a covalent cross-link: Glycyl lysine isopeptide (Lys-Gly) (interchain with G-Cter in SUMO2); alternate. Phosphoserine occurs at positions 111, 134, and 137. 3 disordered regions span residues 121-165 (NNMA…SPSP), 196-240 (AGKT…GPPR), and 255-340 (THSD…RPGV). Over residues 134 to 143 (SVSSPKVTSI) the composition is skewed to polar residues. Positions 144–165 (PSPSSAFTPAHATTSSHASPSP) are enriched in low complexity. 2 stretches are compositionally biased toward polar residues: residues 205 to 219 (RQPT…TSQE) and 226 to 237 (RGSQGDSKQQNG). S228 and S260 each carry phosphoserine. Composition is skewed to basic and acidic residues over residues 258-273 (DASK…DWRP) and 293-304 (EHLKESEADNTK). A compositionally biased stretch (polar residues) spans 305 to 335 (KANNSQEPSPQLASSVASTRSMPESLDSPTS). 3 positions are modified to phosphoserine: S309, S313, and S322. K350 carries the post-translational modification N6-acetyllysine. A disordered region spans residues 354-381 (STGVIKSPSWQRPNQGVPSTGRISNSAT). S360 and S362 each carry phosphoserine. Positions 361–381 (PSWQRPNQGVPSTGRISNSAT) are enriched in polar residues. LIM zinc-binding domains follow at residues 418–477 (PMCA…FFAP), 477–536 (PECG…LFGT), and 536–596 (TICH…SVNF).

In terms of assembly, interacts with various PKC isoforms through the LIM domains. Interacts with actin and alpha-actinin through the PDZ domain. Interacts (via LIM domains) with SIPA1L1/SPAR; this interaction may occur preferentially with isoform 1. As to expression, heart and skeletal muscle specific. Expression is commonly increased in the brain of patients with bipolar disorder, schizophrenia, and major depression.

It is found in the postsynaptic density. The protein localises to the presynapse. Its subcellular location is the postsynapse. It localises to the cytoplasm. The protein resides in the cytosol. May play an important role in the heart development by scaffolding PKC to the Z-disk region. May play a role in the regulation of cardiomyocyte expansion. Isoforms lacking the LIM domains may negatively modulate the scaffolding activity of isoform 1. Overexpression promotes the development of heart hypertrophy. Contributes to the regulation of dendritic spine morphogenesis in neurons. May be required to restrain postsynaptic growth of excitatory synapses. Isoform 1, but not isoform 2, expression favors spine thinning and elongation. The sequence is that of PDZ and LIM domain protein 5 from Homo sapiens (Human).